Here is a 228-residue protein sequence, read N- to C-terminus: ATP-dependent dethiobiotin synthetase BioD (228 aa).

ATP is bound at residue Glu12–Thr17. Thr16 serves as a coordination point for Mg(2+). Lys37 is an active-site residue. Position 41 (Ser41) interacts with substrate. ATP-binding positions include Asp54, Glu116 to Gly119, and Pro205 to Leu207. Residues Asp54 and Glu116 each contribute to the Mg(2+) site.

The protein belongs to the dethiobiotin synthetase family. Homodimer. Requires Mg(2+) as cofactor.

It localises to the cytoplasm. It catalyses the reaction (7R,8S)-7,8-diammoniononanoate + CO2 + ATP = (4R,5S)-dethiobiotin + ADP + phosphate + 3 H(+). The protein operates within cofactor biosynthesis; biotin biosynthesis; biotin from 7,8-diaminononanoate: step 1/2. Its function is as follows. Catalyzes a mechanistically unusual reaction, the ATP-dependent insertion of CO2 between the N7 and N8 nitrogen atoms of 7,8-diaminopelargonic acid (DAPA, also called 7,8-diammoniononanoate) to form a ureido ring. The protein is ATP-dependent dethiobiotin synthetase BioD of Pseudomonas aeruginosa (strain UCBPP-PA14).